A 204-amino-acid polypeptide reads, in one-letter code: NADH-ubiquinone oxidoreductase subunit 9 (204 aa).

It belongs to the complex I 30 kDa subunit family. As to quaternary structure, complex I is composed of about 30 different subunits.

It is found in the mitochondrion inner membrane. The enzyme catalyses a ubiquinone + NADH + 5 H(+)(in) = a ubiquinol + NAD(+) + 4 H(+)(out). Its function is as follows. Core subunit of the mitochondrial membrane respiratory chain NADH dehydrogenase (Complex I) that is believed to belong to the minimal assembly required for catalysis. Complex I functions in the transfer of electrons from NADH to the respiratory chain. The immediate electron acceptor for the enzyme is believed to be ubiquinone. The protein is NADH-ubiquinone oxidoreductase subunit 9 (NAD9) of Reclinomonas americana.